A 929-amino-acid polypeptide reads, in one-letter code: Band 3 anion transport protein (929 aa).

Methionine 1 bears the N-acetylmethionine mark. Residues 1–422 are Cytoplasmic-facing; that stretch reads MGDMRDHEEV…LSDITDALSP (422 aa). Serine 18 is subject to Phosphoserine. 2 positions are modified to phosphotyrosine: tyrosine 31 and tyrosine 56. The segment at 46–67 is disordered; the sequence is ALPTEQTATDYVPSSTSTPHPS. Positions 58 to 67 are enriched in low complexity; it reads PSSTSTPHPS. Residues 69-303 are globular; the sequence is GQVYVELQEL…LGRAAATLMT (235 aa). The tract at residues 190 to 199 is interaction with ANK1; it reads AVLTRSGGAS. Phosphoserine is present on residues serine 199, serine 222, and serine 363. The interval 317-370 is dimerization arm; that stretch reads REELLRSLESFLDCSLVLPPTDAPSEKALLNLVPVQKELLRRRYLPSPAKPDPN. The segment at 366-389 is disordered; sequence KPDPNLYNTLDLNGGKGGPGDEDD. The residue at position 372 (tyrosine 372) is a Phosphotyrosine. Threonine 374 is subject to Phosphothreonine. The chain crosses the membrane as a helical span at residues 423–446; it reads QVLAAVIFIYFAALSPAVTFGGLL. At 447–454 the chain is on the extracellular side; the sequence is GEKTRNLM. A helical transmembrane segment spans residues 455-475; that stretch reads GVSELLISTAVQGILFALLGA. Residues 476-478 are Cytoplasmic-facing; that stretch reads QPL. Residues 479 to 495 traverse the membrane as a discontinuously helical segment; the sequence is LVLGFSGPLLVFEEAFF. The Extracellular segment spans residues 496–504; sequence SFCESNNLE. The chain crosses the membrane as a helical span at residues 505-525; sequence YIVGRAWIGFWLILLVMLVVA. The Cytoplasmic segment spans residues 526–537; that stretch reads FEGSFLVQYISR. A helical transmembrane segment spans residues 538-560; it reads YTQEIFSFLISLIFIYETFSKLI. Topologically, residues 561 to 588 are extracellular; the sequence is KIFQDYPLQQTYAPVVMKPKPQGPVPNT. The chain crosses the membrane as a helical span at residues 589-609; sequence ALFSLVLMAGTFLLAMTLRKF. The Cytoplasmic segment spans residues 610–620; it reads KNSTYFPGKLR. Residues 621 to 641 traverse the membrane as a helical segment; that stretch reads RVIGDFGVPISILIMVLVDSF. The Extracellular segment spans residues 642–681; sequence IKGTYTQKLSVPDGLKVSNSSARGWVIHPLGLYRLFPTWM. Residue asparagine 660 is glycosylated (N-linked (GlcNAc...) asparagine). The chain crosses the membrane as a helical span at residues 682–702; the sequence is MFASVLPALLVFILIFLESQI. Residues 703–718 lie on the Cytoplasmic side of the membrane; the sequence is TTLIVSKPERKMIKGS. A helical membrane pass occupies residues 719–737; that stretch reads GFHLDLLLVVGMGGVAALF. Residues 738 to 755 form a discontinuously helical membrane-spanning segment; that stretch reads GMPWLSATTVRSVTHANA. Residues 756–778 lie on the Cytoplasmic side of the membrane; that stretch reads LTVMGKASGPGAAAQIQEVKEQR. 2 helical membrane-spanning segments follow: residues 779-799 and 800-818; these read ISGL…PILS and RIPL…VTSL. At 819–856 the chain is on the cytoplasmic side; that stretch reads SGIQLFDRILLLFKPPKYHPDVPFVKRVKTWRMHLFTG. An intramembrane region (discontinuously helical) is located at residues 857 to 887; sequence IQIICLAVLWVVKSTPASLALPFVLILTVPL. Cysteine 861 carries the S-palmitoyl cysteine lipid modification. The Cytoplasmic segment spans residues 888–929; the sequence is RRLILPLIFRELELQCLDGDDAKVTFDEENGLDEYDEVPMPV. Position 922 is a phosphotyrosine (tyrosine 922).

This sequence belongs to the anion exchanger (TC 2.A.31) family. As to quaternary structure, a dimer in solution, but in its membrane environment, it exists primarily as a mixture of dimers and tetramers and spans the membrane asymmetrically. Component of the ankyrin-1 complex in the erythrocyte, composed of ANK1, RHCE, RHAG, SLC4A1, EPB42, GYPA, GYPB and AQP1. Interacts with STOM; this interaction positively regulates SLC4A1 activity. Interacts with GYPA; a GYPA monomer is bound at each end of the SLC4A1 dimer forming a heterotetramer. Three SLC4A1 dimers (Band 3-I, Band 3-II and Band 3-III) participates in the ankyrin-1 complex. Interacts (via the cytoplasmic domain) with EPB42; this interaction is mediated by the SLC4A1 Band 3-I dimer. Interacts (via the cytoplasmic domain) directly with ANK1; this interaction is mediated by the SLC4A1 Band 3-II and Band 3-III dimers. In terms of assembly, interacts with TMEM139. Detected in erythrocytes (at protein level).

It is found in the cell membrane. Its subcellular location is the basolateral cell membrane. It catalyses the reaction hydrogencarbonate(in) + chloride(out) = hydrogencarbonate(out) + chloride(in). Its function is as follows. Functions both as a transporter that mediates electroneutral anion exchange across the cell membrane and as a structural protein. Component of the ankyrin-1 complex of the erythrocyte membrane; required for normal flexibility and stability of the erythrocyte membrane and for normal erythrocyte shape via the interactions of its cytoplasmic domain with cytoskeletal proteins, glycolytic enzymes, and hemoglobin. Functions as a transporter that mediates the 1:1 exchange of inorganic anions across the erythrocyte membrane. Mediates chloride-bicarbonate exchange in the kidney, and is required for normal acidification of the urine. The sequence is that of Band 3 anion transport protein from Mus musculus (Mouse).